The primary structure comprises 316 residues: Beta-ketoacyl-[acyl-carrier-protein] synthase III 4 (316 aa).

Active-site residues include Cys114 and His242. An ACP-binding region spans residues 243 to 247 (QANLR). Residue Asn272 is part of the active site.

It belongs to the thiolase-like superfamily. FabH family. As to quaternary structure, homodimer.

The protein localises to the cytoplasm. It carries out the reaction malonyl-[ACP] + acetyl-CoA + H(+) = 3-oxobutanoyl-[ACP] + CO2 + CoA. It participates in lipid metabolism; fatty acid biosynthesis. Catalyzes the condensation reaction of fatty acid synthesis by the addition to an acyl acceptor of two carbons from malonyl-ACP. Catalyzes the first condensation reaction which initiates fatty acid synthesis and may therefore play a role in governing the total rate of fatty acid production. Possesses both acetoacetyl-ACP synthase and acetyl transacylase activities. Its substrate specificity determines the biosynthesis of branched-chain and/or straight-chain of fatty acids. The sequence is that of Beta-ketoacyl-[acyl-carrier-protein] synthase III 4 from Streptomyces coelicolor (strain ATCC BAA-471 / A3(2) / M145).